We begin with the raw amino-acid sequence, 272 residues long: MRERLFSLISKYGLRANSDLGQNFLIVDDIIERNVERAELSGRDVVLEIGPGLGVLTDALSKRAGKVYAIEKDPRLVEILRKEYNWSNVEIIEGDALKVDFPEFNKIVSNLPYQISSPITFRFLGYGFERAVLIYQLEFAQRMVARPGDRNYSRLSLMVQAKSYVELVERIGRGAFYPRPKVDSAVIVLEPKPKSEVIELNEDLVRALFQHRRSTVAAALKKSHHMLGLSKAEFKNVKDVISSAPYAEKRVFQLSPEEVKEIEAYLKVNNII.

S-adenosyl-L-methionine-binding residues include Asn-23, Leu-25, Gly-50, Glu-71, Asp-95, and Asn-110.

It belongs to the class I-like SAM-binding methyltransferase superfamily. rRNA adenine N(6)-methyltransferase family. RsmA subfamily.

It localises to the cytoplasm. In terms of biological role, specifically dimethylates two adjacent adenosines in the loop of a conserved hairpin near the 3'-end of 16S rRNA in the 30S particle. May play a critical role in biogenesis of 30S subunits. The protein is Probable ribosomal RNA small subunit methyltransferase A of Thermococcus onnurineus (strain NA1).